The primary structure comprises 229 residues: MSQPRPLLSPPETEEQLLAQAQQLSGYTLGELAALAGLVTPENLKRDKGWIGVLLEIWLGASAGSKPEQDFAALGVELKTIPVDSLGRPLETTFVCVAPLTGNSGVTWETSHVRRKLKRVLWIPVEGERSIPLAKRRVGSPLLWSPNEEEDRQLREDWEELMDMIVLGQIERITARHGEYLQIRPKAANAKALTEAIGARGERILTLPRGFYLKKNFTSALLARHFLIQ.

The protein belongs to the MutH family.

Its subcellular location is the cytoplasm. In terms of biological role, sequence-specific endonuclease that cleaves unmethylated GATC sequences. It is involved in DNA mismatch repair. This chain is DNA mismatch repair protein MutH, found in Escherichia coli O6:K15:H31 (strain 536 / UPEC).